The following is a 159-amino-acid chain: Phosphopantetheine adenylyltransferase (159 aa).

Residue Ser-9 participates in substrate binding. ATP is bound by residues 9 to 10 (SF) and His-17. The substrate site is built by Lys-41, Leu-74, and Lys-88. ATP contacts are provided by residues 89-91 (GLR), Glu-99, and 123-129 (YLHLSST).

Belongs to the bacterial CoaD family. Homohexamer. Requires Mg(2+) as cofactor.

It is found in the cytoplasm. The catalysed reaction is (R)-4'-phosphopantetheine + ATP + H(+) = 3'-dephospho-CoA + diphosphate. Its pathway is cofactor biosynthesis; coenzyme A biosynthesis; CoA from (R)-pantothenate: step 4/5. Reversibly transfers an adenylyl group from ATP to 4'-phosphopantetheine, yielding dephospho-CoA (dPCoA) and pyrophosphate. This chain is Phosphopantetheine adenylyltransferase, found in Arthrobacter sp. (strain FB24).